The chain runs to 270 residues: Acyl-[acyl-carrier-protein]--UDP-N-acetylglucosamine O-acyltransferase (270 aa).

This sequence belongs to the transferase hexapeptide repeat family. LpxA subfamily. As to quaternary structure, homotrimer.

It localises to the cytoplasm. The enzyme catalyses a (3R)-hydroxyacyl-[ACP] + UDP-N-acetyl-alpha-D-glucosamine = a UDP-3-O-[(3R)-3-hydroxyacyl]-N-acetyl-alpha-D-glucosamine + holo-[ACP]. Its pathway is glycolipid biosynthesis; lipid IV(A) biosynthesis; lipid IV(A) from (3R)-3-hydroxytetradecanoyl-[acyl-carrier-protein] and UDP-N-acetyl-alpha-D-glucosamine: step 1/6. Its function is as follows. Involved in the biosynthesis of lipid A, a phosphorylated glycolipid that anchors the lipopolysaccharide to the outer membrane of the cell. This chain is Acyl-[acyl-carrier-protein]--UDP-N-acetylglucosamine O-acyltransferase, found in Sinorhizobium fredii (strain NBRC 101917 / NGR234).